Reading from the N-terminus, the 141-residue chain is Large ribosomal subunit protein bL17 (141 aa).

Belongs to the bacterial ribosomal protein bL17 family. As to quaternary structure, part of the 50S ribosomal subunit. Contacts protein L32.

This is Large ribosomal subunit protein bL17 from Allorhizobium ampelinum (strain ATCC BAA-846 / DSM 112012 / S4) (Agrobacterium vitis (strain S4)).